Consider the following 220-residue polypeptide: Ribosome assembly protein 3 (220 aa).

A disordered region spans residues 1–91 (MSAGDISAIN…VSDVELTDEE (91 aa)). A compositionally biased stretch (basic residues) spans 13-24 (SVKKNRRRKKRR). A compositionally biased stretch (low complexity) spans 29–39 (SSSDSSSSDPS). Basic and acidic residues predominate over residues 41–72 (ESEKEEIQNGAIEEHVGENGKSDHVFSKGNDE). The segment covering 73 to 91 (DKQEDIAIEVSDVELTDEE) has biased composition (acidic residues). At Ser-83 the chain carries Phosphoserine. Thr-88 carries the phosphothreonine modification. The residue at position 99 (Ser-99) is a Phosphoserine.

The protein belongs to the RSA3 family. Associates with nucleolar pre-ribosomal particles. Interacts with DBP6. Together with DBP6, NOP8, URB1 and URB2, forms an RNA-independent complex, which is required during early maturation of nascent 60S ribosomal subunits.

It localises to the nucleus. The protein resides in the nucleolus. In terms of biological role, required for efficient biogenesis of the 60S ribosomal subunit. In Saccharomyces cerevisiae (strain ATCC 204508 / S288c) (Baker's yeast), this protein is Ribosome assembly protein 3 (RSA3).